We begin with the raw amino-acid sequence, 153 residues long: Regulator of sigma D (153 aa).

The protein belongs to the Rsd/AlgQ family. In terms of assembly, interacts with RpoD.

It is found in the cytoplasm. Its function is as follows. Binds RpoD and negatively regulates RpoD-mediated transcription activation by preventing the interaction between the primary sigma factor RpoD with the catalytic core of the RNA polymerase and with promoter DNA. May be involved in replacement of the RNA polymerase sigma subunit from RpoD to RpoS during the transition from exponential growth to the stationary phase. This is Regulator of sigma D from Pectobacterium atrosepticum (strain SCRI 1043 / ATCC BAA-672) (Erwinia carotovora subsp. atroseptica).